The primary structure comprises 309 residues: Protein FdhE homolog (309 aa).

Belongs to the FdhE family.

The protein localises to the cytoplasm. In terms of biological role, necessary for formate dehydrogenase activity. The sequence is that of Protein FdhE homolog from Pseudomonas aeruginosa (strain ATCC 15692 / DSM 22644 / CIP 104116 / JCM 14847 / LMG 12228 / 1C / PRS 101 / PAO1).